Reading from the N-terminus, the 491-residue chain is uncharacterized protein (491 aa).

In terms of domain architecture, PE spans 1 to 92 (MSFVIASPEA…GGGSYASAEI (92 aa)). Disordered regions lie at residues 114-156 (PLVG…AGGA), 376-400 (AGGS…GNPG), and 419-491 (AGQG…GPDG). Residues 128–145 (GQPGGDGGILWGNGGNGG) show a composition bias toward gly residues. Residues 432 to 480 (GGPGGVGGHGGTAILFGDGGAGGAGAAGGPGTPDGAAGPGGSGGTGGLL) are compositionally biased toward gly residues.

The protein belongs to the mycobacterial PE family. PGRS subfamily.

This is an uncharacterized protein from Mycobacterium bovis (strain ATCC BAA-935 / AF2122/97).